We begin with the raw amino-acid sequence, 101 residues long: Thylakoid-associated protein slr0729 (101 aa).

Its subcellular location is the cellular thylakoid membrane. In Synechocystis sp. (strain ATCC 27184 / PCC 6803 / Kazusa), this protein is Thylakoid-associated protein slr0729.